The following is a 272-amino-acid chain: Exosome complex component Rrp42 (272 aa).

Belongs to the RNase PH family. Rrp42 subfamily. As to quaternary structure, component of the archaeal exosome complex. Forms a hexameric ring-like arrangement composed of 3 Rrp41-Rrp42 heterodimers. The hexameric ring associates with a trimer of Rrp4 and/or Csl4 subunits.

The protein localises to the cytoplasm. In terms of biological role, non-catalytic component of the exosome, which is a complex involved in RNA degradation. Contributes to the structuring of the Rrp41 active site. This Thermococcus kodakarensis (strain ATCC BAA-918 / JCM 12380 / KOD1) (Pyrococcus kodakaraensis (strain KOD1)) protein is Exosome complex component Rrp42.